Reading from the N-terminus, the 118-residue chain is Mu-like prophage FluMu tail tube protein (118 aa).

Positions 12–32 are disordered; sequence RLNGKEWPSDNDGTLTPGGKE.

It to phage Mu protein M.

The chain is Mu-like prophage FluMu tail tube protein from Haemophilus influenzae (strain ATCC 51907 / DSM 11121 / KW20 / Rd).